We begin with the raw amino-acid sequence, 136 residues long: Large ribosomal subunit protein uL16 (136 aa).

The protein belongs to the universal ribosomal protein uL16 family. In terms of assembly, part of the 50S ribosomal subunit.

Binds 23S rRNA and is also seen to make contacts with the A and possibly P site tRNAs. The protein is Large ribosomal subunit protein uL16 of Proteus mirabilis (strain HI4320).